The chain runs to 641 residues: Chaperone protein DnaK (641 aa).

Threonine 199 carries the post-translational modification Phosphothreonine; by autocatalysis. The tract at residues tyrosine 603–alanine 627 is disordered. A compositionally biased stretch (low complexity) spans glycine 604 to glycine 616.

Belongs to the heat shock protein 70 family.

Its function is as follows. Acts as a chaperone. This chain is Chaperone protein DnaK, found in Azoarcus sp. (strain BH72).